Consider the following 606-residue polypeptide: Putative auxin response factor 21 (606 aa).

The TF-B3 DNA-binding region spans 126 to 228; sequence FTKVLTASDT…ELRVGIRRAR (103 aa). A PB1 domain is found at 511 to 592; the sequence is RTCTKVQMQG…MVKKILIYSK (82 aa).

The protein belongs to the ARF family. As to quaternary structure, homodimers and heterodimers.

The protein resides in the nucleus. Its function is as follows. Auxin response factors (ARFs) are transcriptional factors that bind specifically to the DNA sequence 5'-TGTCTC-3' found in the auxin-responsive promoter elements (AuxREs). Could act as transcriptional activator or repressor. Formation of heterodimers with Aux/IAA proteins may alter their ability to modulate early auxin response genes expression. The chain is Putative auxin response factor 21 (ARF21) from Arabidopsis thaliana (Mouse-ear cress).